A 620-amino-acid chain; its full sequence is Probable protein arginine N-methyltransferase 3 (620 aa).

The span at 1-17 (MATREHELRPEQERLGE) shows a compositional bias: basic and acidic residues. The tract at residues 1–45 (MATREHELRPEQERLGEDREEYEDGEEEEEEEEEEEGWDDWESDG) is disordered. Residues 18–45 (DREEYEDGEEEEEEEEEEEGWDDWESDG) show a composition bias toward acidic residues. A C2H2-type 1 zinc finger spans residues 55–78 (LLCLFCSARFDSESSLFSHCASEH). The segment at 110-137 (NKCWSCGQVFSSNSELCGHLHALEIPQL) adopts a C2H2-type 2; degenerate zinc-finger fold. One can recognise an SAM-dependent MTase PRMT-type domain in the interval 253–582 (DESYFGSYSS…DECPAVMIRS (330 aa)). S-adenosyl-L-homocysteine is bound by residues Arg275, Gly299, Asp321, Ser323, and Glu364. Active-site residues include Glu383 and Glu392.

Belongs to the class I-like SAM-binding methyltransferase superfamily. Protein arginine N-methyltransferase family.

Its subcellular location is the cytoplasm. It localises to the cytosol. It catalyses the reaction L-arginyl-[protein] + S-adenosyl-L-methionine = N(omega)-methyl-L-arginyl-[protein] + S-adenosyl-L-homocysteine + H(+). The catalysed reaction is L-arginyl-[protein] + 2 S-adenosyl-L-methionine = N(omega),N(omega)-dimethyl-L-arginyl-[protein] + 2 S-adenosyl-L-homocysteine + 2 H(+). Its function is as follows. Protein-arginine N-methyltransferase that catalyzes both the monomethylation and asymmetric dimethylation of the guanidino nitrogens of arginine residues in target proteins, and therefore falls into the group of type I methyltransferases. The chain is Probable protein arginine N-methyltransferase 3 (PRMT3) from Oryza sativa subsp. indica (Rice).